Consider the following 113-residue polypeptide: U11-theraphotoxin-Hhn1e (113 aa).

The signal sequence occupies residues 1–21 (MNTVRVTFLLVFVLAVSLGQA). The propeptide occupies 22 to 74 (DKDENRMEMLEKTEQGKSYLDFAENLLLQKLEELEARLLEEDSEESRNSRQKR). Over residues 60–69 (LEEDSEESRN) the composition is skewed to basic and acidic residues. The segment at 60–87 (LEEDSEESRNSRQKRCIGEGVPRDENDP) is disordered. 2 cysteine pairs are disulfide-bonded: Cys-75–Cys-90 and Cys-89–Cys-110.

It belongs to the neurotoxin 14 (magi-1) family. 01 (HNTX-16) subfamily. In terms of tissue distribution, expressed by the venom gland.

It is found in the secreted. Functionally, probable ion channel inhibitor. The sequence is that of U11-theraphotoxin-Hhn1e from Cyriopagopus hainanus (Chinese bird spider).